The chain runs to 261 residues: WW domain-binding protein 2 (261 aa).

The GRAM domain maps to M1–Q84. The residue at position 192 (Y192) is a Phosphotyrosine; by YES and SRC. The PPxY motif 1 motif lies at P196 to Y200. Positions P196–S209 are enriched in pro residues. The interval P196–Q261 is disordered. Low complexity predominate over residues A218 to A230. Y231 is subject to Phosphotyrosine; by YES and SRC. The segment covering S245 to P254 has biased composition (pro residues). The PPxY motif 2 signature appears at P248–Y252.

Binds to the WW domain of YAP1, WWP1 and WWP2. Interacts with NEDD4. Interacts with ESR1 and UBE3A. In terms of processing, phosphorylated in repsonse to EGF as well as estrogen and progesterone hormones. Tyr-192 and Tyr-231 are phosphorylated by YES and SRC inducing nuclear translocation. As to expression, ubiquitous.

Its subcellular location is the cytoplasm. It localises to the nucleus. In terms of biological role, acts as a transcriptional coactivator of estrogen and progesterone receptors (ESR1 and PGR) upon hormone activation. In presence of estrogen, binds to ESR1-responsive promoters. Synergizes with YAP1 to enhance PGR activity. Modulates expression of post-synaptic scaffolding proteins via regulation of ESR1, ESR2 and PGR. The polypeptide is WW domain-binding protein 2 (Homo sapiens (Human)).